We begin with the raw amino-acid sequence, 296 residues long: GTPase Era (296 aa).

The 168-residue stretch at Lys-3–Glu-170 folds into the Era-type G domain. The tract at residues Gly-11–Ser-18 is G1. A GTP-binding site is contributed by Gly-11 to Ser-18. Residues Gln-37 to Asn-41 are G2. Residues Asp-58–Gly-61 form a G3 region. GTP contacts are provided by residues Asp-58–Ile-62 and Asn-120–Asp-123. The tract at residues Asn-120–Asp-123 is G4. Residues Ile-149 to Ala-151 form a G5 region. The KH type-2 domain occupies Leu-201 to Glu-278.

Belongs to the TRAFAC class TrmE-Era-EngA-EngB-Septin-like GTPase superfamily. Era GTPase family. Monomer.

It localises to the cytoplasm. The protein localises to the cell membrane. An essential GTPase that binds both GDP and GTP, with rapid nucleotide exchange. Plays a role in 16S rRNA processing and 30S ribosomal subunit biogenesis and possibly also in cell cycle regulation and energy metabolism. The sequence is that of GTPase Era from Clostridium botulinum (strain Langeland / NCTC 10281 / Type F).